Consider the following 67-residue polypeptide: Small ribosomal subunit protein eS17 (67 aa).

The protein belongs to the eukaryotic ribosomal protein eS17 family. Part of the 30S ribosomal subunit.

The polypeptide is Small ribosomal subunit protein eS17 (Thermococcus kodakarensis (strain ATCC BAA-918 / JCM 12380 / KOD1) (Pyrococcus kodakaraensis (strain KOD1))).